The primary structure comprises 367 residues: D-alanine--D-alanine ligase (367 aa).

An ATP-grasp domain is found at 145–351 (KRLLRDAGLP…QPALMDELVA (207 aa)). 174–229 (RAVGSSELFVKPANLGSSVGISKTRDAAEFEAACQLALRFDRKILIERCIAPVREI) serves as a coordination point for ATP. 3 residues coordinate Mg(2+): Asp-306, Glu-318, and Asn-320.

The protein belongs to the D-alanine--D-alanine ligase family. Mg(2+) serves as cofactor. Requires Mn(2+) as cofactor.

The protein localises to the cytoplasm. It catalyses the reaction 2 D-alanine + ATP = D-alanyl-D-alanine + ADP + phosphate + H(+). The protein operates within cell wall biogenesis; peptidoglycan biosynthesis. Cell wall formation. The chain is D-alanine--D-alanine ligase from Bradyrhizobium sp. (strain ORS 278).